We begin with the raw amino-acid sequence, 111 residues long: uncharacterized protein (111 aa).

The chain crosses the membrane as a helical span at residues His-27–Phe-47.

The protein resides in the membrane. This is an uncharacterized protein from Saccharomyces cerevisiae (strain ATCC 204508 / S288c) (Baker's yeast).